The following is a 303-amino-acid chain: UDP-3-O-acyl-N-acetylglucosamine deacetylase (303 aa).

H78, H237, and D241 together coordinate Zn(2+). H264 serves as the catalytic Proton donor.

This sequence belongs to the LpxC family. The cofactor is Zn(2+).

The catalysed reaction is a UDP-3-O-[(3R)-3-hydroxyacyl]-N-acetyl-alpha-D-glucosamine + H2O = a UDP-3-O-[(3R)-3-hydroxyacyl]-alpha-D-glucosamine + acetate. The protein operates within glycolipid biosynthesis; lipid IV(A) biosynthesis; lipid IV(A) from (3R)-3-hydroxytetradecanoyl-[acyl-carrier-protein] and UDP-N-acetyl-alpha-D-glucosamine: step 2/6. Catalyzes the hydrolysis of UDP-3-O-myristoyl-N-acetylglucosamine to form UDP-3-O-myristoylglucosamine and acetate, the committed step in lipid A biosynthesis. This chain is UDP-3-O-acyl-N-acetylglucosamine deacetylase, found in Coxiella burnetii (strain CbuG_Q212) (Coxiella burnetii (strain Q212)).